Here is a 273-residue protein sequence, read N- to C-terminus: Undecaprenyl-diphosphatase (273 aa).

Helical transmembrane passes span Ser6 to Ser26, Ala45 to Trp65, Leu90 to His110, Leu116 to Ala136, Tyr190 to Leu210, Gly222 to Ile242, and Ile252 to Phe272.

It belongs to the UppP family.

The protein localises to the cell inner membrane. The enzyme catalyses di-trans,octa-cis-undecaprenyl diphosphate + H2O = di-trans,octa-cis-undecaprenyl phosphate + phosphate + H(+). Its function is as follows. Catalyzes the dephosphorylation of undecaprenyl diphosphate (UPP). Confers resistance to bacitracin. The protein is Undecaprenyl-diphosphatase of Escherichia coli O7:K1 (strain IAI39 / ExPEC).